The following is a 404-amino-acid chain: CCA-adding enzyme (404 aa).

2 residues coordinate ATP: G27 and R30. Residues G27 and R30 each coordinate CTP. The Mg(2+) site is built by D40 and D42. The ATP site is built by R111, D154, R157, R160, and R163. CTP contacts are provided by R111, D154, R157, R160, and R163.

This sequence belongs to the tRNA nucleotidyltransferase/poly(A) polymerase family. Bacterial CCA-adding enzyme type 3 subfamily. In terms of assembly, homodimer. Mg(2+) is required as a cofactor.

The catalysed reaction is a tRNA precursor + 2 CTP + ATP = a tRNA with a 3' CCA end + 3 diphosphate. It carries out the reaction a tRNA with a 3' CCA end + 2 CTP + ATP = a tRNA with a 3' CCACCA end + 3 diphosphate. In terms of biological role, catalyzes the addition and repair of the essential 3'-terminal CCA sequence in tRNAs without using a nucleic acid template. Adds these three nucleotides in the order of C, C, and A to the tRNA nucleotide-73, using CTP and ATP as substrates and producing inorganic pyrophosphate. tRNA 3'-terminal CCA addition is required both for tRNA processing and repair. Also involved in tRNA surveillance by mediating tandem CCA addition to generate a CCACCA at the 3' terminus of unstable tRNAs. While stable tRNAs receive only 3'-terminal CCA, unstable tRNAs are marked with CCACCA and rapidly degraded. This is CCA-adding enzyme from Geobacillus thermodenitrificans (strain NG80-2).